A 713-amino-acid chain; its full sequence is Polyribonucleotide nucleotidyltransferase (713 aa).

The Mg(2+) site is built by Asp-488 and Asp-494. In terms of domain architecture, KH spans Pro-555 to Ile-614. The region spanning Gly-624–Lys-692 is the S1 motif domain.

The protein belongs to the polyribonucleotide nucleotidyltransferase family. The cofactor is Mg(2+).

It localises to the cytoplasm. The enzyme catalyses RNA(n+1) + phosphate = RNA(n) + a ribonucleoside 5'-diphosphate. Involved in mRNA degradation. Catalyzes the phosphorolysis of single-stranded polyribonucleotides processively in the 3'- to 5'-direction. The chain is Polyribonucleotide nucleotidyltransferase from Hyphomonas neptunium (strain ATCC 15444).